The primary structure comprises 929 residues: LPS-assembly protein LptD (929 aa).

The N-terminal stretch at 1–33 (MAVKSLVFRRKFPLLVTGSLLALQPVAALTVQA) is a signal peptide. Residues 58–101 (NLPPRPAHTATSVSTAAAGSSVSGSGGETVEAEPTQRLVTESGG) form a disordered region. Positions 66-90 (TATSVSTAAAGSSVSGSGGETVEAE) are enriched in low complexity.

This sequence belongs to the LptD family. As to quaternary structure, component of the lipopolysaccharide transport and assembly complex. Interacts with LptE and LptA.

It is found in the cell outer membrane. Functionally, together with LptE, is involved in the assembly of lipopolysaccharide (LPS) at the surface of the outer membrane. The chain is LPS-assembly protein LptD from Pseudomonas aeruginosa (strain LESB58).